Consider the following 298-residue polypeptide: Aquaporin NIP2-1 (298 aa).

N-linked (GlcNAc...) asparagine glycosylation is found at N4, N13, and N26. The next 2 helical transmembrane spans lie at 51 to 71 (VVSEVVATFLLVFMTCGAAGI) and 85 to 105 (SIAGGLIVTVMIYAVGHISGA). Positions 108–110 (NPA) match the NPA 1 motif. A run of 3 helical transmembrane segments spans residues 124–144 (IQVPFYWAAQFTGAICASFVL), 166–186 (SLVVEVIVTFNMMFVTLAVAT), and 194–214 (LAGLAVGSAVCITSIFAGAIS). Positions 219–221 (NPA) match the NPA 2 motif. Residues 237–257 (WIYFLGPVMGTLSGAWTYTFI) traverse the membrane as a helical segment.

Belongs to the MIP/aquaporin (TC 1.A.8) family. NIP (TC 1.A.8.12) subfamily. Mainly expressed in the roots. In roots, it localizes in the main and lateral roots, but not in root hairs. Within a root, it localizes on the plasma membrane of the distal side of both exodermis and endodermis, where casparian strips exist (at protein level). Expressed low levels in leaves and anthers.

The protein resides in the cell membrane. Functionally, silicon influx transporter responsible for silicon transport from the external solution to the root cells. Is coupled with the silicon efflux transporter LSI2 in both exodermal and endodermal root cells for an efficient silicon transport across the cells into the stele. Silicon is beneficial to plant growth and helps plants to overcome abiotic and biotic stresses by preventing lodging (falling over) and increasing resistance to pests and diseases, as well as other stresses. Is coupled with LSI2 transporter in roots for efficient uptake of arsenite, which is further dispatched in shoots and grains. Mediates uptake of methylated arsenic species in roots. The chain is Aquaporin NIP2-1 from Oryza sativa subsp. japonica (Rice).